We begin with the raw amino-acid sequence, 813 residues long: Sodium/hydrogen exchanger 2 (813 aa).

A run of 7 helical transmembrane segments spans residues 108–128, 139–159, 170–190, 210–230, 238–258, 279–299, and 309–329; these read IVPE…IIFG, TDVF…YFMP, IFWY…LSLF, LFGS…FENI, ILVF…YNLF, FFVV…IAAF, and VIEP…AEMF. Residue Asn-351 is glycosylated (N-linked (GlcNAc...) asparagine). 4 helical membrane passes run 362–382, 393–413, 431–451, and 460–480; these read YFMK…MGVS, AFVC…VFVL, FIIA…FLLP, and LFIT…GITI. Basic and acidic residues predominate over residues 649–661; it reads LRKDNSLNRERRA. 2 disordered regions span residues 649–709 and 736–813; these read LRKD…NLQP and DVGS…NEKP. Polar residues predominate over residues 687–696; sequence VSNADGNSSD. Basic and acidic residues-rich tracts occupy residues 770-781 and 797-813; these read KDQRFGRGREDS and RASE…NEKP.

It belongs to the monovalent cation:proton antiporter 1 (CPA1) transporter (TC 2.A.36) family. In terms of assembly, interacts with CHP1 and CHP2. In terms of tissue distribution, predominantly in small intestine, colon, and stomach, with much lower levels in skeletal muscle, kidney, brain, testis, uterus, heart and lung.

It is found in the apical cell membrane. The catalysed reaction is Na(+)(in) + H(+)(out) = Na(+)(out) + H(+)(in). Its activity is regulated as follows. Li(+) activates Na(+)/H(+) exchanger. Plasma membrane Na(+)/H(+) antiporter. Mediates the electroneutral exchange of intracellular H(+) ions for extracellular Na(+). Major apical Na(+)/H(+) exchanger in the base of the colonic crypt. Controls in the colonic crypt intracellular pH (pHi) to direct colonic epithelial cell differentiation into the absorptive enterocyte lineage at the expense of the secretory lineage. This Rattus norvegicus (Rat) protein is Sodium/hydrogen exchanger 2 (Slc9a2).